The following is an 856-amino-acid chain: V-type proton ATPase subunit a (856 aa).

Topologically, residues methionine 1 to glutamate 409 are cytoplasmic. The helical transmembrane segment at valine 410 to phenylalanine 428 threads the bilayer. The Vacuolar segment spans residues glycine 429–aspartate 430. The chain crosses the membrane as a helical span at residues phenylalanine 431–tryptophan 447. The Cytoplasmic portion of the chain corresponds to glutamate 448–alanine 460. A helical membrane pass occupies residues methionine 461–serine 490. Topologically, residues methionine 491–serine 544 are vacuolar. A helical transmembrane segment spans residues tyrosine 545–phenylalanine 564. Residues serine 565–phenylalanine 582 lie on the Cytoplasmic side of the membrane. Residues valine 583–lysine 603 traverse the membrane as a helical segment. At tryptophan 604–isoleucine 648 the chain is on the vacuolar side. A helical transmembrane segment spans residues leucine 649–leucine 668. Residues arginine 669 to threonine 738 lie on the Cytoplasmic side of the membrane. The segment at valine 689 to alanine 710 is disordered. The segment covering leucine 692–glutamate 707 has biased composition (acidic residues). Residues isoleucine 739–glutamine 763 traverse the membrane as a helical segment. Over glutamine 764–glycine 784 the chain is Vacuolar. Residues glycine 785–glutamate 823 traverse the membrane as a helical segment. Residues serine 824–glycine 856 are Cytoplasmic-facing.

It belongs to the V-ATPase 116 kDa subunit family. As to quaternary structure, V-ATPase is a heteromultimeric enzyme composed of a peripheral catalytic V1 complex (components A to H) attached to an integral membrane V0 proton pore complex (components: a, c, c', c'', d, e, f and VOA1).

The protein localises to the vacuole membrane. Its function is as follows. Subunit of the V0 complex of vacuolar(H+)-ATPase (V-ATPase), a multisubunit enzyme composed of a peripheral complex (V1) that hydrolyzes ATP and a membrane integral complex (V0) that translocates protons. V-ATPase is responsible for acidifying and maintaining the pH of intracellular compartments. In Neurospora crassa (strain ATCC 24698 / 74-OR23-1A / CBS 708.71 / DSM 1257 / FGSC 987), this protein is V-type proton ATPase subunit a (vph-1).